The chain runs to 66 residues: Photosystem II reaction center protein J (66 aa).

Residues 37-57 traverse the membrane as a helical segment; it reads LWLVATAGGMAVIFVVGLFFY.

This sequence belongs to the PsbJ family. As to quaternary structure, PSII is composed of 1 copy each of membrane proteins PsbA, PsbB, PsbC, PsbD, PsbE, PsbF, PsbH, PsbI, PsbJ, PsbK, PsbL, PsbM, PsbT, PsbX, PsbY, PsbZ, Psb30/Ycf12, peripheral proteins PsbO, CyanoQ (PsbQ), PsbU, PsbV and a large number of cofactors. It forms dimeric complexes.

The protein resides in the cellular thylakoid membrane. Its function is as follows. One of the components of the core complex of photosystem II (PSII). PSII is a light-driven water:plastoquinone oxidoreductase that uses light energy to abstract electrons from H(2)O, generating O(2) and a proton gradient subsequently used for ATP formation. It consists of a core antenna complex that captures photons, and an electron transfer chain that converts photonic excitation into a charge separation. This is Photosystem II reaction center protein J from Synechococcus sp. (strain CC9311).